The following is a 187-amino-acid chain: MDKRPEETSVIPESLKYAGPMSRLARAFSGFRMASYASDVGEATRGTFPNQFVHSMYAVTISYIFVDLYFRYKDNKHLSNNKQCDSKMTEFQKYMGYHTLWHAQASLFFPTITIHSIVSSTKEFTANINWLNPKVKKFAPVCLSLALIPCLIKPIDDLADKIMDYSYCKLTCYQPHDKHHTESAHEN.

This is an uncharacterized protein from Acanthamoeba polyphaga mimivirus (APMV).